Consider the following 1062-residue polypeptide: Cell division control protein 7 (1062 aa).

The Protein kinase domain maps to Ile-9 to Val-259. Residues Leu-15–Val-23 and Lys-38 each bind ATP. The active-site Proton acceptor is Asp-131. Polar residues-rich tracts occupy residues Asn-296–Tyr-310 and Ala-376–Ser-394. 3 disordered regions span residues Asn-296–Asn-331, Asn-361–Ser-394, and Asn-1038–Gln-1062.

Belongs to the protein kinase superfamily. Ser/Thr protein kinase family. CDC7 subfamily. As to quaternary structure, interacts with spg1. Seems to interact with cdc11. The cofactor is Mg(2+).

The enzyme catalyses L-seryl-[protein] + ATP = O-phospho-L-seryl-[protein] + ADP + H(+). The catalysed reaction is L-threonyl-[protein] + ATP = O-phospho-L-threonyl-[protein] + ADP + H(+). Protein kinase essential for cell division. Plays a key role in initiation of septum formation and cytokinesis. The protein is Cell division control protein 7 (cdc7) of Schizosaccharomyces pombe (strain 972 / ATCC 24843) (Fission yeast).